The chain runs to 1120 residues: MVLNSLDKMIQLQKNTANIRNICVLAHVDHGKTTLADCLISSNGIISSRLAGKLRYMDSREDEQIRGITMKSSAISLHYATGNEEYLINLIDSPGHVDFSSEVSTAVRICDGCIIVVDAVEGVCPQTQAVLRQAWLENIRPVLVINKIDRLIVELKFTPQEAYSHLKNILEQINALTGTLFTSKVLEERAERETESQVNPNSEQGEQVYDWSTGLEDTDDSHLYFSPEQGNVVFTSAIDGWGFGIEHFARIYSQKIGIKKEVLMKTLWGDYYINMKAKKIMKGDQAKGKKPLFVQLILENIWSLYDAVLKKDKDKIDKIVTSLGLKIGAREARHSDPKVQINAICSQWLPISHAVLAMVCQKLPSPLDITAERVERLMCTGSQTFDSFPPETQALKAAFMKCGSEDTAPVIIFVSKMFAVDAKALPQNKPRPLTQEEIAQRRERARQRHAEKLAAAQGQAPLEPTQDGSAIETCPKGEEPRGDEQQVESMTPKPVLQEENNQESFIAFARVFSGVARRGKKIFVLGPKYSPLEFLRRVPLGFSAPPDGLPQVPHMAYCALENLYLLMGRELEYLEEVPPGNVLGIGGLQDFVLKSATLCSLPSCPPFIPLNFEATPIVRVAVEPKHPSEMPQLVKGMKLLNQADPCVQILIQETGEHVLVTAGEVHLQRCLDDLKERFAKIHISVSEPIIPFRETITKPPKVDMVNEEIGKQQKVAVIHQMKEDQSKIPEGIQVDSDGLITITTPNKLATLSVRAMPLPEEVTQILEENSDLIRSMEQLTSSLNEGENTHMIHQKTQEKIWEFKGKLEQHLTGRRWRNIVDQIWSFGPRKCGPNILVNKSEDFQNSVWTGPADKASKEASRYRDLGNSIVSGFQLATLSGPMCEEPLMGVCFVLEKWDLSKFEEQGASDLAKEGQEENETCSGGNENQELQDGCSEAFEKRTSQKGESPLTDCYGPFSGQLIATMKEACRYALQVKPQRLMAAMYTCDIMATGDVLGRVYAVLSKREGRVLQEEMKEGTDMFIIKAVLPVAESFGFADEIRKRTSGLASPQLVFSHWEIIPSDPFWVPTTEEEYLHFGEKADSENQARKYMNAVRKRKGLYVEEKIVEHAEKQRTLSKNK.

Residues 17–272 (ANIRNICVLA…LMKTLWGDYY (256 aa)) enclose the tr-type G domain. Residues 26 to 33 (AHVDHGKT), 92 to 96 (DSPGH), and 146 to 149 (NKID) each bind GTP. Residues 430 to 496 (PRPLTQEEIA…VESMTPKPVL (67 aa)) are disordered. Basic and acidic residues-rich tracts occupy residues 438 to 452 (IAQR…HAEK) and 475 to 484 (PKGEEPRGDE). Lys528 carries the N6-acetyllysine modification. Positions 907–930 (ASDLAKEGQEENETCSGGNENQEL) are disordered. Polar residues predominate over residues 920 to 930 (TCSGGNENQEL).

Belongs to the TRAFAC class translation factor GTPase superfamily. Classic translation factor GTPase family. Associates with the 60S ribosomal subunit. Found in a complex consisting of the 60S ribosomal subunit, SBDS and EFL1. Interacts with SBDS and binds to GTP and GDP; the interaction with SBDS decreases EFL1 affinity for GDP and facilitates GDP release. Expressed at low levels in brain. Expression is highly increased in glioma tissues.

It carries out the reaction GTP + H2O = GDP + phosphate + H(+). Its activity is regulated as follows. GTPase activity is stimulated in the presence of 60S ribosome subunits. In terms of biological role, GTPase involved in the biogenesis of the 60S ribosomal subunit and translational activation of ribosomes. Together with SBDS, triggers the GTP-dependent release of EIF6 from 60S pre-ribosomes in the cytoplasm, thereby activating ribosomes for translation competence by allowing 80S ribosome assembly and facilitating EIF6 recycling to the nucleus, where it is required for 60S rRNA processing and nuclear export. This chain is Elongation factor-like GTPase 1, found in Homo sapiens (Human).